The chain runs to 233 residues: Large ribosomal subunit protein uL1 (233 aa).

The protein belongs to the universal ribosomal protein uL1 family. In terms of assembly, part of the 50S ribosomal subunit.

Functionally, binds directly to 23S rRNA. The L1 stalk is quite mobile in the ribosome, and is involved in E site tRNA release. Its function is as follows. Protein L1 is also a translational repressor protein, it controls the translation of the L11 operon by binding to its mRNA. The protein is Large ribosomal subunit protein uL1 of Zymomonas mobilis subsp. mobilis (strain ATCC 31821 / ZM4 / CP4).